A 115-amino-acid polypeptide reads, in one-letter code: uncharacterized protein (115 aa).

3 helical membrane-spanning segments follow: residues 6–26 (ILIILVIILTTYFTRIWPFMV), 43–63 (ALSCSVIGMLVIYCFKDIHIL), and 84–104 (IFKVFVLSITLPTILYMVLVQ).

It belongs to the AzlD/HI_1737/HP1330 family.

Its subcellular location is the cell membrane. This is an uncharacterized protein from Helicobacter pylori (strain ATCC 700392 / 26695) (Campylobacter pylori).